The following is a 52-amino-acid chain: ERMES regulator 1 (52 aa).

Residues 1-27 (MIFFFNQIRSIFTALHTPTQQIQLSRR) are Mitochondrial intermembrane-facing. Residues 28 to 46 (AFFQFLGYLGSCVVISLAA) traverse the membrane as a helical segment. Residues 47 to 52 (QSKYVQ) are Cytoplasmic-facing.

Belongs to the EMR1 family.

The protein resides in the mitochondrion outer membrane. In terms of biological role, mediates the formation of endoplasmic reticulum (ER)-mitochondria encounter structure (ERMES) foci, thereby contributing to the formation of ER-mitochondrial contact sites. In Saccharomyces cerevisiae (strain ATCC 204508 / S288c) (Baker's yeast), this protein is ERMES regulator 1.